The following is a 264-amino-acid chain: Thymidylate synthase (264 aa).

Arg21 serves as a coordination point for dUMP. Residue His51 participates in (6R)-5,10-methylene-5,6,7,8-tetrahydrofolate binding. 126–127 (RR) is a dUMP binding site. Cys146 (nucleophile) is an active-site residue. Residues 166 to 169 (RSAD), Asn177, and 207 to 209 (HLY) each bind dUMP. Asp169 contributes to the (6R)-5,10-methylene-5,6,7,8-tetrahydrofolate binding site. Ala263 contacts (6R)-5,10-methylene-5,6,7,8-tetrahydrofolate.

This sequence belongs to the thymidylate synthase family. Bacterial-type ThyA subfamily. As to quaternary structure, homodimer.

The protein resides in the cytoplasm. The enzyme catalyses dUMP + (6R)-5,10-methylene-5,6,7,8-tetrahydrofolate = 7,8-dihydrofolate + dTMP. It participates in pyrimidine metabolism; dTTP biosynthesis. In terms of biological role, catalyzes the reductive methylation of 2'-deoxyuridine-5'-monophosphate (dUMP) to 2'-deoxythymidine-5'-monophosphate (dTMP) while utilizing 5,10-methylenetetrahydrofolate (mTHF) as the methyl donor and reductant in the reaction, yielding dihydrofolate (DHF) as a by-product. This enzymatic reaction provides an intracellular de novo source of dTMP, an essential precursor for DNA biosynthesis. This chain is Thymidylate synthase, found in Legionella pneumophila (strain Paris).